Reading from the N-terminus, the 374-residue chain is F-box/LRR-repeat protein 8 (374 aa).

The 47-residue stretch at 2–48 folds into the F-box domain; sequence AEPGEQLPEEVLALIFRHLPLPDRAAAARVCRAWAAAATCSAVWHDT.

Directly interacts with SKP1 and CUL1.

Substrate-recognition component of the SCF (SKP1-CUL1-F-box protein)-type E3 ubiquitin ligase complex. In Bos taurus (Bovine), this protein is F-box/LRR-repeat protein 8 (FBXL8).